A 546-amino-acid polypeptide reads, in one-letter code: Glucose-6-phosphate isomerase 1 (546 aa).

Glu353 acts as the Proton donor in catalysis. Residues His384 and Lys512 contribute to the active site.

It belongs to the GPI family.

Its subcellular location is the cytoplasm. The enzyme catalyses alpha-D-glucose 6-phosphate = beta-D-fructose 6-phosphate. The protein operates within carbohydrate biosynthesis; gluconeogenesis. Its pathway is carbohydrate degradation; glycolysis; D-glyceraldehyde 3-phosphate and glycerone phosphate from D-glucose: step 2/4. Functionally, catalyzes the reversible isomerization of glucose-6-phosphate to fructose-6-phosphate. The polypeptide is Glucose-6-phosphate isomerase 1 (Colwellia psychrerythraea (strain 34H / ATCC BAA-681) (Vibrio psychroerythus)).